The following is a 296-amino-acid chain: Giardin subunit alpha-3 (296 aa).

Annexin repeat units lie at residues 3-72, 74-146, 153-222, and 226-295; these read DTVT…SNCW, ELPV…TWIK, NNIN…TAHY, and GMNN…VLWR.

Belongs to the annexin family. Giardin subunit alpha subfamily.

It is found in the cytoplasm. The protein localises to the cytoskeleton. Functionally, giardins are involved in parasite attachment to the intestinal mucosa and in the cytoskeletal disassembly and reassembly that marks the transition from infectious trophozoite to transmissible cyst. They may interact with other cytoskeletal proteins such as microtubules in the microribbons or crossbridges, to maintain the integrity of the ventral disk. The polypeptide is Giardin subunit alpha-3 (Giardia intestinalis (Giardia lamblia)).